The chain runs to 453 residues: Putative sodium-coupled neutral amino acid transporter 11 (453 aa).

Positions 1–34 (MSYQQPQLRGPLQRETDPSDRESLVSGHEHGGKS) are disordered. Basic and acidic residues predominate over residues 12 to 32 (LQRETDPSDRESLVSGHEHGG). The next 11 membrane-spanning stretches (helical) occupy residues 39-59 (AVFN…PYSM), 66-86 (LGIL…VLLI), 106-126 (GFPG…IAMI), 152-172 (FISR…PLSL), 179-199 (LGKI…VVVT), 222-242 (AIQA…CFLV), 262-282 (ILVS…TFTG), 299-319 (VTFG…IECF), 337-357 (VFHV…SLLI), 359-379 (CLGI…IFII), and 399-419 (MACV…VMAI).

This sequence belongs to the amino acid/polyamine transporter 2 family. As to expression, widely expressed.

The protein localises to the membrane. Its function is as follows. Putative sodium-dependent amino acid/proton antiporter. The polypeptide is Putative sodium-coupled neutral amino acid transporter 11 (Slc38a11) (Rattus norvegicus (Rat)).